Reading from the N-terminus, the 393-residue chain is RNA polymerase II holoenzyme cyclin-like subunit (393 aa).

A Cyclin N-terminal domain is found at 51-146 (ICKRLNLRQR…LLEEMEFDMV (96 aa)).

It belongs to the cyclin family. Cyclin C subfamily. Component of the SRB8-11 complex, a regulatory module of the Mediator complex.

The protein resides in the nucleus. In terms of biological role, component of the SRB8-11 complex. The SRB8-11 complex is a regulatory module of the Mediator complex which is itself involved in regulation of basal and activated RNA polymerase II-dependent transcription. The SRB8-11 complex may be involved in the transcriptional repression of a subset of genes regulated by Mediator. It may inhibit the association of the Mediator complex with RNA polymerase II to form the holoenzyme complex. The SRB8-11 complex phosphorylates the C-terminal domain (CTD) of the largest subunit of RNA polymerase II. The protein is RNA polymerase II holoenzyme cyclin-like subunit (SSN8) of Mycosarcoma maydis (Corn smut fungus).